A 178-amino-acid polypeptide reads, in one-letter code: uncharacterized protein (178 aa).

This is an uncharacterized protein from Schizosaccharomyces pombe (strain 972 / ATCC 24843) (Fission yeast).